The sequence spans 631 residues: Protein FRIABLE 1 (631 aa).

Low complexity predominate over residues 1 to 13; it reads MSVGVPVNPSSSS. Residues 1 to 36 are disordered; the sequence is MSVGVPVNPSSSSQLPAAPTTTTRRRVADSQEDHSH. At 1-120 the chain is on the cytoplasmic side; sequence MSVGVPVNPS…NMRSTTNLGR (120 aa). Residues 26–36 are compositionally biased toward basic and acidic residues; that stretch reads RVADSQEDHSH. Residues 121–141 traverse the membrane as a helical; Signal-anchor for type II membrane protein segment; that stretch reads FILTLLSILVVTFFLIVALSG. The Lumenal portion of the chain corresponds to 142–631; sequence GVGRRRKHVE…RPSLRAQSLR (490 aa). Residues asparagine 246, asparagine 329, and asparagine 364 are each glycosylated (N-linked (GlcNAc...) asparagine). 384 to 386 lines the substrate pocket; that stretch reads HLR. Asparagine 398 and asparagine 425 each carry an N-linked (GlcNAc...) asparagine glycan.

It belongs to the glycosyltransferase GT106 family. Ubiquitous. Strong expression in young seedlings, particularly at the junction between hypocotyl and root, in emerging cotyledons, and in parts of the roots. Also detected in the inflorescence (sepals, petals, mature pollen and siliques) and rosette leaves.

Its subcellular location is the golgi apparatus membrane. Its pathway is glycan metabolism. In terms of biological role, glycosyltransferase required for normal cell adhesion and cell wall integrity. In Arabidopsis thaliana (Mouse-ear cress), this protein is Protein FRIABLE 1.